A 130-amino-acid polypeptide reads, in one-letter code: Small ribosomal subunit protein eS8 (130 aa).

Belongs to the eukaryotic ribosomal protein eS8 family. In terms of assembly, part of the 30S ribosomal subunit.

The polypeptide is Small ribosomal subunit protein eS8 (Thermococcus onnurineus (strain NA1)).